Here is a 274-residue protein sequence, read N- to C-terminus: uncharacterized protein (274 aa).

Residues 99-206 (NNVISGYVDL…ESEMEIFIQK (108 aa)) are a coiled coil.

This is an uncharacterized protein from Dictyostelium discoideum (Social amoeba).